The sequence spans 326 residues: F-box/LRR-repeat protein 12 (326 aa).

The F-box domain occupies 1 to 47 (MATLFDLPDLVLLEIFSYLPVRDRIRISRVCHRWKRLVDDRWLWRHV). LRR repeat units follow at residues 51–78 (LYTM…RMGG), 86–111 (APQL…CLHV), 113–133 (DLSM…ELHS), 161–185 (VPAF…VLGG), 186–211 (TYRV…EVLG), 212–236 (CTLS…IRLT), 237–261 (VGGL…CFQG), and 266–291 (PDMP…EVQG).

Interacts with SKP1 and CUL1.

It participates in protein modification; protein ubiquitination. Functionally, substrate-recognition component of the SCF (SKP1-CUL1-F-box protein)-type E3 ubiquitin ligase complex. Mediates the polyubiquitination and proteasomal degradation of CAMK1 leading to disruption of cyclin D1/CDK4 complex assembly which results in G1 cell cycle arrest in lung epithelia. This Mus musculus (Mouse) protein is F-box/LRR-repeat protein 12 (Fbxl12).